The sequence spans 347 residues: Protein RecA (347 aa).

80-87 lines the ATP pocket; that stretch reads GPESSGKT.

The protein belongs to the RecA family.

The protein resides in the cytoplasm. In terms of biological role, can catalyze the hydrolysis of ATP in the presence of single-stranded DNA, the ATP-dependent uptake of single-stranded DNA by duplex DNA, and the ATP-dependent hybridization of homologous single-stranded DNAs. It interacts with LexA causing its activation and leading to its autocatalytic cleavage. This Chlorobaculum parvum (strain DSM 263 / NCIMB 8327) (Chlorobium vibrioforme subsp. thiosulfatophilum) protein is Protein RecA.